The primary structure comprises 204 residues: Tat proofreading chaperone DmsD (204 aa).

The protein belongs to the TorD/DmsD family. DmsD subfamily.

Functionally, required for biogenesis/assembly of DMSO reductase, but not for the interaction of the DmsA signal peptide with the Tat system. May be part of a chaperone cascade complex that facilitates a folding-maturation pathway for the substrate protein. This is Tat proofreading chaperone DmsD from Escherichia coli O157:H7.